The primary structure comprises 217 residues: Variable small protein 22 (217 aa).

The first 18 residues, 1–18, serve as a signal peptide directing secretion; the sequence is MRKRISAIIMTLFMVFMS. Cysteine 19 is lipidated: N-palmitoyl cysteine. Cysteine 19 carries S-diacylglycerol cysteine lipidation. Positions 151 to 174 are disordered; it reads LGKNDASDDDTKKAIKKDNSDKTK. The segment covering 155 to 174 has biased composition (basic and acidic residues); sequence DASDDDTKKAIKKDNSDKTK.

The protein belongs to the variable small protein (Vsp) family.

It is found in the cell outer membrane. In terms of biological role, the Vlp and Vsp proteins are antigenically distinct proteins, only one vlp or vsp gene is transcriptionally active at any one time. Switching between these genes is a mechanism of host immune response evasion. The protein is Variable small protein 22 of Borrelia hermsii.